We begin with the raw amino-acid sequence, 222 residues long: L-serine dehydratase, beta chain (222 aa).

Residues 150 to 222 (TILLEYPEQR…RFTTAKYVEV (73 aa)) form the ACT domain.

The protein belongs to the iron-sulfur dependent L-serine dehydratase family. As to quaternary structure, heterooctamer of four alpha chains and four beta chains. It depends on [4Fe-4S] cluster as a cofactor.

The enzyme catalyses L-serine = pyruvate + NH4(+). It functions in the pathway carbohydrate biosynthesis; gluconeogenesis. This Peptoniphilus asaccharolyticus (Peptostreptococcus asaccharolyticus) protein is L-serine dehydratase, beta chain (sdhB).